We begin with the raw amino-acid sequence, 386 residues long: GTPase Obg (386 aa).

One can recognise an Obg domain in the interval 4–162; sequence SNFVDYVKIY…MTVILELKLL (159 aa). A disordered region spans residues 18-45; the sequence is KGGRGSTHMRREKYTPNGGPDGGDGGRG. Over residues 36 to 45 the composition is skewed to gly residues; it reads GPDGGDGGRG. The OBG-type G domain occupies 163 to 329; sequence ADVGLVGFPN…LKDILWTELN (167 aa). GTP contacts are provided by residues 169-176, 194-198, 216-219, 283-286, and 310-312; these read GFPNAGKS, FTTLE, DIPG, TKSD, and SSV. Mg(2+) is bound by residues Ser176 and Thr196. The segment at 351–386 is disordered; sequence ELKDMGEDEELDYEYEDDGDEDDLDYEYEEEDWEDK. The segment covering 356 to 386 has biased composition (acidic residues); the sequence is GEDEELDYEYEDDGDEDDLDYEYEEEDWEDK.

The protein belongs to the TRAFAC class OBG-HflX-like GTPase superfamily. OBG GTPase family. As to quaternary structure, monomer. Requires Mg(2+) as cofactor.

The protein localises to the cytoplasm. Functionally, an essential GTPase which binds GTP, GDP and possibly (p)ppGpp with moderate affinity, with high nucleotide exchange rates and a fairly low GTP hydrolysis rate. Plays a role in control of the cell cycle, stress response, ribosome biogenesis and in those bacteria that undergo differentiation, in morphogenesis control. The chain is GTPase Obg from Bacteroides fragilis (strain YCH46).